The primary structure comprises 117 residues: Non-specific lipid-transfer protein 1 (117 aa).

The signal sequence occupies residues 1–26; that stretch reads MAYSAMTKLALVVALCMVVSVPIAQA. 4 disulfide bridges follow: Cys-29–Cys-76, Cys-39–Cys-53, Cys-54–Cys-99, and Cys-74–Cys-113.

This sequence belongs to the plant LTP family.

Functionally, plant non-specific lipid-transfer proteins transfer phospholipids as well as galactolipids across membranes. May play a role in wax or cutin deposition in the cell walls of expanding epidermal cells and certain secretory tissues. This is Non-specific lipid-transfer protein 1 from Prunus dulcis (Almond).